Consider the following 221-residue polypeptide: Glutathione peroxidase (221 aa).

Residues 1–19 form the signal peptide; it reads MFIQLLILSYAILLQLIAT. The N-linked (GlcNAc...) asparagine glycan is linked to Asn-28. Residue Cys-72 is part of the active site. 2 N-linked (GlcNAc...) asparagine glycosylation sites follow: Asn-87 and Asn-90.

It belongs to the glutathione peroxidase family. In terms of assembly, homotetramer.

It is found in the secreted. The protein localises to the extracellular space. It catalyses the reaction 2 glutathione + H2O2 = glutathione disulfide + 2 H2O. This chain is Glutathione peroxidase, found in Dirofilaria immitis (Canine heartworm).